We begin with the raw amino-acid sequence, 93 residues long: Acylphosphatase (93 aa).

Residues 6–92 (RAHVWVGGKV…EGLTHFEVLR (87 aa)) enclose the Acylphosphatase-like domain. Active-site residues include arginine 21 and asparagine 39.

Belongs to the acylphosphatase family.

The catalysed reaction is an acyl phosphate + H2O = a carboxylate + phosphate + H(+). The chain is Acylphosphatase (acyP) from Gloeobacter violaceus (strain ATCC 29082 / PCC 7421).